A 225-amino-acid chain; its full sequence is U2 small nuclear ribonucleoprotein B'' (225 aa).

An RRM 1 domain is found at 7-86 (HTIYINNMND…KPMRIQYAKT (80 aa)). Residues 99 to 145 (ADKEKKKEKKKAKTVEQTATTTNKKPGQGTPNSANTQGNSTPNPQVP) form a disordered region. Lysine 111 carries the N6-acetyllysine; alternate modification. A Glycyl lysine isopeptide (Lys-Gly) (interchain with G-Cter in SUMO2); alternate cross-link involves residue lysine 111. The segment covering 113 to 123 (VEQTATTTNKK) has biased composition (low complexity). Polar residues predominate over residues 127-141 (GTPNSANTQGNSTPN). Tyrosine 151 is subject to Phosphotyrosine. One can recognise an RRM 2 domain in the interval 151-225 (YILFLNNLPE…HAMKITYAKK (75 aa)).

Belongs to the RRM U1 A/B'' family. As to quaternary structure, identified in the spliceosome B complex. Identified in the spliceosome C complex. Present in a spliceosome complex assembled in vitro, and composed of SNRPB2, HPRP8BP and CRNKL1. Contributes to the binding of stem loop IV of U2 snRNA with SNRPP1.

The protein resides in the nucleus. Involved in pre-mRNA splicing as component of the spliceosome. Associated with sn-RNP U2, where it contributes to the binding of stem loop IV of U2 snRNA. This chain is U2 small nuclear ribonucleoprotein B'' (SNRPB2), found in Homo sapiens (Human).